We begin with the raw amino-acid sequence, 769 residues long: 4-hydroxybenzoyl-CoA reductase subunit alpha (769 aa).

Residues Gln-214, 244 to 245, 522 to 526, 650 to 655, and 722 to 725 contribute to the Mo-molybdopterin cytosine dinucleotide site; these read GF, SSRVT, VGKALN, and KEAS.

Belongs to the xanthine dehydrogenase family. As to quaternary structure, heterohexamer of two alpha, two beta and two gamma subunits. Mo-molybdopterin cytosine dinucleotide serves as cofactor. In terms of processing, the N-terminus is blocked.

The enzyme catalyses oxidized 2[4Fe-4S]-[ferredoxin] + benzoyl-CoA + H2O = 4-hydroxybenzoyl-CoA + reduced 2[4Fe-4S]-[ferredoxin] + 2 H(+). Inactivated by low concentrations of cyanide in vitro. In terms of biological role, component of a complex that catalyzes the reductive dehydroxylation of 4-hydroxybenzoyl-CoA to benzoyl-CoA. Reaction is not reversible. Is a key enzyme in the anaerobic degradation of phenolic compounds. The protein is 4-hydroxybenzoyl-CoA reductase subunit alpha (hcrA) of Thauera aromatica.